The following is an 864-amino-acid chain: Probable M1 family aminopeptidase 2 (864 aa).

Substrate is bound by residues Glu149 and 289-293; that span reads GAMEN. His325 provides a ligand contact to Zn(2+). The active-site Proton acceptor is the Glu326. Zn(2+)-binding residues include His329 and Glu348.

This sequence belongs to the peptidase M1 family. Zn(2+) is required as a cofactor.

This is Probable M1 family aminopeptidase 2 from Encephalitozoon cuniculi (strain GB-M1) (Microsporidian parasite).